Reading from the N-terminus, the 285-residue chain is MSRNFSMRAKVYLKPLVFFQIIDAYDRRPKGDNQVMGTLLGRNKEGHIEITNCFTVPHKEHSENKRIDLDMAYASEVLELNMFAYPNERVLGWFCTGKSVSRSASLIHDYYVRECCEGQPLHLLVDAALKNQRLSTRLYCAVEMGVPGGTKGLMFSLVPLEISNENSDLVALRCIEKQSQQQASKQMERFVPELAQVVDATRDMQHRLDLVLRYINDVLARKKKPDNVVGRSLYAALTAVPLLDSDKFRVMFNTNLRDMLMAITLSTMIKTQLEISEKLSCMQDQ.

The region spanning 11 to 145 (VYLKPLVFFQ…TRLYCAVEMG (135 aa)) is the MPN domain.

The protein belongs to the eIF-3 subunit F family. In terms of assembly, component of the eukaryotic translation initiation factor 3 (eIF-3) complex. The eIF-3 complex interacts with pix.

Its subcellular location is the cytoplasm. Its function is as follows. Component of the eukaryotic translation initiation factor 3 (eIF-3) complex, which is involved in protein synthesis of a specialized repertoire of mRNAs and, together with other initiation factors, stimulates binding of mRNA and methionyl-tRNAi to the 40S ribosome. The eIF-3 complex specifically targets and initiates translation of a subset of mRNAs involved in cell proliferation. The polypeptide is Eukaryotic translation initiation factor 3 subunit F-2 (Drosophila melanogaster (Fruit fly)).